Here is a 168-residue protein sequence, read N- to C-terminus: T-cell surface glycoprotein CD3 delta chain (168 aa).

An N-terminal signal peptide occupies residues 1–21 (MEHSRFLSCLILAALLSQVNP). At 22–102 (RILKVLEPED…CVELDTATLA (81 aa)) the chain is on the extracellular side. A disulfide bridge links Cys37 with Cys74. Residues Asn38 and Asn56 are each glycosylated (N-linked (GlcNAc...) asparagine). A helical transmembrane segment spans residues 103–123 (GMIITDIIATVLLALGVYCFA). Residues 124 to 168 (GHETGRFSRAADTQALMGNDQLYQPLRERNDAQYSRLGDKWARNK) lie on the Cytoplasmic side of the membrane. In terms of domain architecture, ITAM spans 135-163 (DTQALMGNDQLYQPLRERNDAQYSRLGDK). Phosphotyrosine occurs at positions 146 and 157.

The TCR-CD3 complex is composed of a CD3D/CD3E and a CD3G/CD3E heterodimers that preferentially associate with TCRalpha and TCRbeta, respectively, to form TCRalpha/CD3E/CD3G and TCRbeta/CD3G/CD3E trimers. In turn, the hexamer interacts with CD3Z homodimer to form the TCR-CD3 complex. Alternatively, TCRalpha and TCRbeta can be replaced by TCRgamma and TCRdelta. Interacts with coreceptors CD4 and CD8. In terms of processing, phosphorylated on Tyr residues after T-cell receptor triggering by LCK in association with CD4/CD8. CD3D is mostly present on T-lymphocytes with its TCR-CD3 partners. Present also in fetal NK-cells.

Its subcellular location is the cell membrane. Functionally, part of the TCR-CD3 complex present on T-lymphocyte cell surface that plays an essential role in adaptive immune response. When antigen presenting cells (APCs) activate T-cell receptor (TCR), TCR-mediated signals are transmitted across the cell membrane by the CD3 chains CD3D, CD3E, CD3G and CD3Z. All CD3 chains contain immunoreceptor tyrosine-based activation motifs (ITAMs) in their cytoplasmic domain. Upon TCR engagement, these motifs become phosphorylated by Src family protein tyrosine kinases LCK and FYN, resulting in the activation of downstream signaling pathways. In addition of this role of signal transduction in T-cell activation, CD3D plays an essential role in thymocyte differentiation. Indeed, participates in correct intracellular TCR-CD3 complex assembly and surface expression. In absence of a functional TCR-CD3 complex, thymocytes are unable to differentiate properly. Interacts with CD4 and CD8 and thus serves to establish a functional link between the TCR and coreceptors CD4 and CD8, which is needed for activation and positive selection of CD4 or CD8 T-cells. The protein is T-cell surface glycoprotein CD3 delta chain (CD3D) of Bos taurus (Bovine).